A 387-amino-acid polypeptide reads, in one-letter code: Exodeoxyribonuclease 7 large subunit (387 aa).

The protein belongs to the XseA family. As to quaternary structure, heterooligomer composed of large and small subunits.

It localises to the cytoplasm. It carries out the reaction Exonucleolytic cleavage in either 5'- to 3'- or 3'- to 5'-direction to yield nucleoside 5'-phosphates.. Its function is as follows. Bidirectionally degrades single-stranded DNA into large acid-insoluble oligonucleotides, which are then degraded further into small acid-soluble oligonucleotides. This is Exodeoxyribonuclease 7 large subunit from Campylobacter lari (strain RM2100 / D67 / ATCC BAA-1060).